The chain runs to 325 residues: Solute carrier family 35 member B1 (325 aa).

Transmembrane regions (helical) follow at residues 18 to 38 (PVCF…QESI), 54 to 74 (FALS…KLLI), 88 to 108 (WLYA…NSAL), 139 to 159 (YPLA…LFMY), 171 to 191 (IFGY…LTGV), 213 to 233 (LWST…WEFL), 246 to 266 (ILLF…TVVY), and 288 to 308 (VILF…LVFL). The short motif at 321–325 (KKTSH) is the Di-lysine motif element.

The protein belongs to the nucleotide-sugar transporter family. SLC35B subfamily.

The protein localises to the endoplasmic reticulum membrane. Functionally, probable sugar transporter. The sequence is that of Solute carrier family 35 member B1 (SLC35B1) from Gallus gallus (Chicken).